Here is a 427-residue protein sequence, read N- to C-terminus: 3-phosphoshikimate 1-carboxyvinyltransferase (427 aa).

The 3-phosphoshikimate site is built by Lys20, Ser21, and Arg25. Residue Lys20 participates in phosphoenolpyruvate binding. Gly92 and Arg120 together coordinate phosphoenolpyruvate. The 3-phosphoshikimate site is built by Ser166, Gln168, Asp312, and Lys339. Gln168 contributes to the phosphoenolpyruvate binding site. Asp312 (proton acceptor) is an active-site residue. Arg343 and Arg385 together coordinate phosphoenolpyruvate.

The protein belongs to the EPSP synthase family. In terms of assembly, monomer.

It is found in the cytoplasm. It catalyses the reaction 3-phosphoshikimate + phosphoenolpyruvate = 5-O-(1-carboxyvinyl)-3-phosphoshikimate + phosphate. It participates in metabolic intermediate biosynthesis; chorismate biosynthesis; chorismate from D-erythrose 4-phosphate and phosphoenolpyruvate: step 6/7. In terms of biological role, catalyzes the transfer of the enolpyruvyl moiety of phosphoenolpyruvate (PEP) to the 5-hydroxyl of shikimate-3-phosphate (S3P) to produce enolpyruvyl shikimate-3-phosphate and inorganic phosphate. The chain is 3-phosphoshikimate 1-carboxyvinyltransferase from Streptococcus thermophilus (strain ATCC BAA-250 / LMG 18311).